We begin with the raw amino-acid sequence, 223 residues long: Probable transaldolase (223 aa).

Catalysis depends on Lys-86, which acts as the Schiff-base intermediate with substrate.

Belongs to the transaldolase family. Type 3B subfamily.

The protein localises to the cytoplasm. The catalysed reaction is D-sedoheptulose 7-phosphate + D-glyceraldehyde 3-phosphate = D-erythrose 4-phosphate + beta-D-fructose 6-phosphate. It participates in carbohydrate degradation; pentose phosphate pathway; D-glyceraldehyde 3-phosphate and beta-D-fructose 6-phosphate from D-ribose 5-phosphate and D-xylulose 5-phosphate (non-oxidative stage): step 2/3. Transaldolase is important for the balance of metabolites in the pentose-phosphate pathway. The chain is Probable transaldolase (tal) from Thermoplasma volcanium (strain ATCC 51530 / DSM 4299 / JCM 9571 / NBRC 15438 / GSS1).